The chain runs to 390 residues: Probable purine permease 7 (390 aa).

A run of 10 helical transmembrane segments spans residues 42–62 (WLRV…ATIL), 74–94 (TYVV…FRFF), 110–130 (SPSF…VSAY), 131–151 (AYLS…LILA), 169–189 (FTPL…LLVV), 205–225 (VIGF…LSLI), 244–264 (LAIY…FASG), 286–306 (TLAS…GLIF), 312–332 (FSNS…VIVF), and 341–361 (IFSI…HYLD).

This sequence belongs to the purine permeases (TC 2.A.7.14) family.

It is found in the membrane. The sequence is that of Probable purine permease 7 (PUP7) from Arabidopsis thaliana (Mouse-ear cress).